Here is a 168-residue protein sequence, read N- to C-terminus: Peptide deformylase 2 (168 aa).

The Fe cation site is built by cysteine 91 and histidine 133. The active site involves glutamate 134. A Fe cation-binding site is contributed by histidine 137.

It belongs to the polypeptide deformylase family. Requires Fe(2+) as cofactor.

The catalysed reaction is N-terminal N-formyl-L-methionyl-[peptide] + H2O = N-terminal L-methionyl-[peptide] + formate. In terms of biological role, removes the formyl group from the N-terminal Met of newly synthesized proteins. Requires at least a dipeptide for an efficient rate of reaction. N-terminal L-methionine is a prerequisite for activity but the enzyme has broad specificity at other positions. This Vibrio parahaemolyticus serotype O3:K6 (strain RIMD 2210633) protein is Peptide deformylase 2.